The sequence spans 594 residues: Ferredoxin--nitrite reductase, chloroplastic (594 aa).

A chloroplast-targeting transit peptide spans 1–32; it reads MASLPVNKIIPSSTTLLSSSNNNRRRNNSSIR. The span at 13-22 shows a compositional bias: low complexity; it reads STTLLSSSNN. A disordered region spans residues 13-36; the sequence is STTLLSSSNNNRRRNNSSIRCQKA. 4 residues coordinate [4Fe-4S] cluster: C473, C479, C514, and C518. Siroheme is bound at residue C518.

The protein belongs to the nitrite and sulfite reductase 4Fe-4S domain family. In terms of assembly, monomer. Requires siroheme as cofactor. [4Fe-4S] cluster is required as a cofactor.

It localises to the plastid. The protein localises to the chloroplast. The catalysed reaction is 6 oxidized [2Fe-2S]-[ferredoxin] + NH4(+) + 2 H2O = nitrite + 6 reduced [2Fe-2S]-[ferredoxin] + 8 H(+). It participates in nitrogen metabolism; nitrate reduction (assimilation). The sequence is that of Ferredoxin--nitrite reductase, chloroplastic (NIR) from Spinacia oleracea (Spinach).